We begin with the raw amino-acid sequence, 523 residues long: Cyclic di-GMP binding protein BcsE (523 aa).

This sequence belongs to the BcsE family.

Functionally, required for cellulose biosynthesis. May have protease activity, but BcsA is not targeted. Binds bis-(3'-5') cyclic diguanylic acid (c-di-GMP). The protein is Cyclic di-GMP binding protein BcsE of Salmonella typhimurium (strain LT2 / SGSC1412 / ATCC 700720).